The following is a 279-amino-acid chain: Large ribosomal subunit protein uL2 (279 aa).

The disordered stretch occupies residues 202-279 (NASIGKAGRS…TSRHKSKKKG (78 aa)). Residues 209 to 220 (GRSRWLGRRPHN) are compositionally biased toward basic residues.

This sequence belongs to the universal ribosomal protein uL2 family. In terms of assembly, part of the 50S ribosomal subunit. Forms a bridge to the 30S subunit in the 70S ribosome.

One of the primary rRNA binding proteins. Required for association of the 30S and 50S subunits to form the 70S ribosome, for tRNA binding and peptide bond formation. It has been suggested to have peptidyltransferase activity; this is somewhat controversial. Makes several contacts with the 16S rRNA in the 70S ribosome. The protein is Large ribosomal subunit protein uL2 of Methylocella silvestris (strain DSM 15510 / CIP 108128 / LMG 27833 / NCIMB 13906 / BL2).